The chain runs to 191 residues: UPF0312 protein Shew185_3055 (191 aa).

A signal peptide spans 1-22; that stretch reads MKKQLLSALIGASLLAPMAASA.

Belongs to the UPF0312 family. Type 1 subfamily.

The protein resides in the periplasm. This Shewanella baltica (strain OS185) protein is UPF0312 protein Shew185_3055.